The following is a 343-amino-acid chain: MTTITITRPDDWHIHLRDGAQLKDTVRDISRYMGRAIVMPNLVPPAIDTETALTYYDRIKAQVPAGSQFEPLMVLYLTDKTSPDEIRKAKASGKIVAAKLYPAGATTNSDSGVTDLKNIYPALEAMQEVGMLFLVHGEVTDSSIDIFDRERVFIENILSKIVADFPELKIVLEHITTKDAVDFVTQASDNVAATITAHHLLYNRNHMLAGGIRPHFYCLPILKRNTHQQALLAAAASGSKKFFLGTDSAPHAKDKKEAACGCAGSYTAHAAIELYAEAFESVNALDKLEAFASFNGPDFYNLPRNADTITLVKKSWDVPATYPLGDTNVVPIRAGEAIDWQVE.

His13 and His15 together coordinate Zn(2+). Residues 15 to 17 and Asn41 each bind substrate; that span reads HLR. Lys99, His136, and His174 together coordinate Zn(2+). Lys99 is subject to N6-carboxylysine. His136 contacts substrate. Leu219 contributes to the substrate binding site. A Zn(2+)-binding site is contributed by Asp247. Asp247 is an active-site residue. Positions 251 and 263 each coordinate substrate.

The protein belongs to the metallo-dependent hydrolases superfamily. DHOase family. Class II DHOase subfamily. In terms of assembly, homodimer. Zn(2+) serves as cofactor.

It carries out the reaction (S)-dihydroorotate + H2O = N-carbamoyl-L-aspartate + H(+). It functions in the pathway pyrimidine metabolism; UMP biosynthesis via de novo pathway; (S)-dihydroorotate from bicarbonate: step 3/3. In terms of biological role, catalyzes the reversible cyclization of carbamoyl aspartate to dihydroorotate. The polypeptide is Dihydroorotase (Shewanella baltica (strain OS223)).